The chain runs to 318 residues: Lysophospholipase D GDPD3 (318 aa).

The Cytoplasmic segment spans residues 1–2; sequence MS. The chain crosses the membrane as a helical span at residues 3–23; that stretch reads LLLYYALPALGSYAMLSIFFL. The Extracellular segment spans residues 24–198; that stretch reads RRPHLLHTPR…KAANPEMPLS (175 aa). Residues 39–308 enclose the GP-PDE domain; the sequence is IRLGAHRGGS…DYPTALRHYL (270 aa). 3 residues coordinate a divalent metal cation: glutamate 71, aspartate 73, and histidine 86. A helical transmembrane segment spans residues 199-221; it reads FTISRGFWVLLSYYLGLLPFIPI. Over 222-318 the chain is Cytoplasmic; the sequence is PEKFFFCFLP…DNHGPAARTS (97 aa).

This sequence belongs to the glycerophosphoryl diester phosphodiesterase family. In terms of tissue distribution, widely expressed, with high level in kidney and ovary.

The protein resides in the membrane. The protein localises to the cytoplasm. It localises to the perinuclear region. Its subcellular location is the endoplasmic reticulum. It carries out the reaction 1-hexadecanoyl-sn-glycero-3-phosphocholine + H2O = 1-hexadecanoyl-sn-glycero-3-phosphate + choline + H(+). The enzyme catalyses 1-hexadecanoyl-sn-glycero-3-phosphocholine + H2O = sn-glycerol 3-phosphocholine + hexadecanoate + H(+). It catalyses the reaction 1-O-(1Z-octadecenyl)-sn-glycero-3-phospho-N-hexadecanoyl-ethanolamine + H2O = 1-O-(1Z-octadecenyl)-sn-glycero-3-phosphate + N-hexadecanoylethanolamine + H(+). The catalysed reaction is N-(5Z,8Z,11Z,14Z-eicosatetraenoyl)-1-(9Z-octadecenoyl)-sn-glycero-3-phosphoethanolamine + H2O = N-(5Z,8Z,11Z,14Z-eicosatetraenoyl)-ethanolamine + 1-(9Z-octadecenoyl)-sn-glycero-3-phosphate + H(+). It carries out the reaction N,1-di-(9Z-octadecenoyl)-sn-glycero-3-phosphoethanolamine + H2O = N-(9Z-octadecenoyl) ethanolamine + 1-(9Z-octadecenoyl)-sn-glycero-3-phosphate + H(+). The enzyme catalyses N-hexadecanoyl-1-(9Z-octadecenoyl)-sn-glycero-3-phosphoethanolamine + H2O = N-hexadecanoylethanolamine + 1-(9Z-octadecenoyl)-sn-glycero-3-phosphate + H(+). It catalyses the reaction 1-O-hexadecyl-sn-glycero-3-phosphocholine + H2O = 1-O-hexadecyl-sn-glycero-3-phosphate + choline + H(+). Its activity is regulated as follows. Lysophospholipase D activity is stimulated by calcium. Loss of lysophospholipase D activity in presence of EDTA. Hydrolyzes lysoglycerophospholipids to produce lysophosphatidic acid (LPA) and the corresponding amines. Shows a preference for 1-O-alkyl-sn-glycero-3-phosphocholine (lyso-PAF), lysophosphatidylcholine (lyso-PC) and N-acylethanolamine lysophospholipids. Does not display glycerophosphodiester phosphodiesterase activity, since it cannot hydrolyze either glycerophosphoinositol or glycerophosphocholine. The chain is Lysophospholipase D GDPD3 from Homo sapiens (Human).